Reading from the N-terminus, the 542-residue chain is Major facilitator superfamily domain-containing protein 6-like (542 aa).

11 consecutive transmembrane segments (helical) span residues 46–66, 89–109, 198–218, 246–266, 272–292, 321–341, 352–372, 381–401, 404–424, 444–464, and 469–489; these read LGLS…LALL, LLSS…GILV, MFFL…PLEW, VGAA…FCRI, FYSY…LPIY, VTVI…LWLM, GICL…AGPL, WMLV…SFLW, WAVM…WWSV, FEAF…GFVV, and VNVL…ALAV.

The protein belongs to the major facilitator superfamily. MFSD6 family.

It localises to the membrane. In Danio rerio (Zebrafish), this protein is Major facilitator superfamily domain-containing protein 6-like (mfsd6l).